Reading from the N-terminus, the 872-residue chain is G-type lectin S-receptor-like serine/threonine-protein kinase At5g24080 (872 aa).

An N-terminal signal peptide occupies residues 1–25 (MSSFHFYFPSVGLFSFFCFFLVSLA). Topologically, residues 26–472 (TEPHIGLGSK…SRKSHGLRQK (447 aa)) are extracellular. The 120-residue stretch at 30-149 (IGLGSKLKAS…EVTAGPTIWQ (120 aa)) folds into the Bulb-type lectin domain. 6 N-linked (GlcNAc...) asparagine glycosylation sites follow: N49, N117, N208, N219, N261, and N294. In terms of domain architecture, EGF-like; atypical spans 306 to 344 (VSNPCDIAGICGNGVCNLDRTKKNADCLCLPGSVKLPDQ). 2 disulfides stabilise this stretch: C310–C321 and C316–C332. Residues N353, N367, and N390 are each glycosylated (N-linked (GlcNAc...) asparagine). One can recognise a PAN domain in the interval 360–447 (CESNINRNGS…PGSTLFVKTR (88 aa)). Disulfide bonds link C400/C424 and C404/C410. N-linked (GlcNAc...) asparagine glycans are attached at residues N449 and N459. The helical transmembrane segment at 473 to 493 (VLVIPIVVGMLVLVALLGMLL) threads the bilayer. Over 494–872 (YYNLDRKRTL…TCSYSSMSPR (379 aa)) the chain is Cytoplasmic. Position 521 is a phosphothreonine (T521). Residues 530–810 (NNFSQLLGSG…LEGTSDEINL (281 aa)) enclose the Protein kinase domain. ATP is bound by residues 536–544 (LGSGGFGTV) and K558. Residue Y603 is modified to Phosphotyrosine. The interval 619–637 (EQTANLLDWRTRFEIAVAT) is caM-binding. D656 serves as the catalytic Proton acceptor. Phosphothreonine is present on residues T690 and T695.

The protein belongs to the protein kinase superfamily. Ser/Thr protein kinase family.

It localises to the cell membrane. The enzyme catalyses L-seryl-[protein] + ATP = O-phospho-L-seryl-[protein] + ADP + H(+). It carries out the reaction L-threonyl-[protein] + ATP = O-phospho-L-threonyl-[protein] + ADP + H(+). This Arabidopsis thaliana (Mouse-ear cress) protein is G-type lectin S-receptor-like serine/threonine-protein kinase At5g24080.